The chain runs to 90 residues: MKVRPLGARLLIKPIQEEKRTEGGIVLPDTAKEKPMKAEVVAVGNLEDSDVDIVVGDKVIFSKYSGTEIKIEDDDYIIIDVEDILAKIED.

It belongs to the GroES chaperonin family. As to quaternary structure, heptamer of 7 subunits arranged in a ring. Interacts with the chaperonin GroEL.

It is found in the cytoplasm. Its function is as follows. Together with the chaperonin GroEL, plays an essential role in assisting protein folding. The GroEL-GroES system forms a nano-cage that allows encapsulation of the non-native substrate proteins and provides a physical environment optimized to promote and accelerate protein folding. GroES binds to the apical surface of the GroEL ring, thereby capping the opening of the GroEL channel. This Thermosipho melanesiensis (strain DSM 12029 / CIP 104789 / BI429) protein is Co-chaperonin GroES.